A 289-amino-acid chain; its full sequence is MSSNTRVALVTGANKGIGFAIVRDLCRQFAGDVVLTARDVARGQAAVKQLQAEGLSPRFHQLDIIDLQSIRALCDFLRKEYGGLDVLVNNAAIAFQLDNPTPFHIQAELTMKTNFMGTRNVCTELLPLIKPQGRVVNVSSTEGVRALNECSPELQQKFKSETITEEELVGLMNKFVEDTKNGVHRKEGWSDSTYGVTKIGVSVLSRIYARKLREQRAGDKILLNACCPGWVRTDMGGPKAPKSPEVGAETPVYLALLPSDAEGPHGQFVTDKKVVEWGVPPESYPWVNA.

Position 2 is an N-acetylserine (Ser-2). Ser-2 is modified (phosphoserine). NADP(+) contacts are provided by residues 10–34 (VTGANKGIGFAIVRDLCRQFAGDVV), 63–64 (DI), and Asn-90. Glutathione is bound by residues 95–97 (FQL) and Gln-106. A substrate-binding site is contributed by Ser-140. Position 193-194 (193-194 (TY)) interacts with glutathione. Tyr-194 serves as the catalytic Proton acceptor. NADP(+)-binding positions include 194 to 198 (YGVTK) and 231 to 233 (VRT). Lys-239 is subject to N6-1-carboxyethyl lysine.

The protein belongs to the short-chain dehydrogenases/reductases (SDR) family. As to quaternary structure, monomer. Expressed in kidney (at protein level).

The protein localises to the cytoplasm. It carries out the reaction a secondary alcohol + NADP(+) = a ketone + NADPH + H(+). The enzyme catalyses prostaglandin E1 + NADP(+) = 15-oxoprostaglandin E1 + NADPH + H(+). The catalysed reaction is prostaglandin F2alpha + NADP(+) = prostaglandin E2 + NADPH + H(+). It catalyses the reaction prostaglandin D2 + NADP(+) = 15-oxoprostaglandin D2 + NADPH + H(+). It carries out the reaction prostaglandin E2 + NADP(+) = 15-oxoprostaglandin E2 + NADPH + H(+). The enzyme catalyses prostaglandin F2alpha + NADP(+) = 15-oxoprostaglandin F2alpha + NADPH + H(+). The catalysed reaction is menadione + NADPH + H(+) = menadiol + NADP(+). It catalyses the reaction daunorubicin + NADPH + H(+) = 13-dihydrodaunorubicin + NADP(+). It carries out the reaction S-nitrosoglutathione + NADPH + H(+) = S-(hydroxysulfenamide)glutathione + NADP(+). The enzyme catalyses a primary alcohol + NADP(+) = an aldehyde + NADPH + H(+). The catalysed reaction is cortisol + NADPH + H(+) = 20beta-dihydrocortisol + NADP(+). It catalyses the reaction corticosterone + NADPH + H(+) = 20beta-dihydrocorticosterone + NADP(+). NADPH-dependent reductase with broad substrate specificity. Catalyzes the reduction of a wide variety of carbonyl compounds including quinones, prostaglandins, menadione, plus various xenobiotics. Catalyzes the reduction of the antitumor anthracyclines doxorubicin and daunorubicin to the cardiotoxic compounds doxorubicinol and daunorubicinol. Can convert prostaglandin E2 to prostaglandin F2-alpha. Can bind glutathione, which explains its higher affinity for glutathione-conjugated substrates. Catalyzes the reduction of S-nitrosoglutathione. In addition, participates in the glucocorticoid metabolism by catalyzing the NADPH-dependent cortisol/corticosterone into 20beta-dihydrocortisol (20b-DHF) or 20beta-corticosterone (20b-DHB), which are weak agonists of NR3C1 and NR3C2 in adipose tissue. The protein is Carbonyl reductase [NADPH] 1 of Sus scrofa (Pig).